The following is a 480-amino-acid chain: Mannose-1-phosphate guanylyltransferase ManC (480 aa).

It belongs to the mannose-6-phosphate isomerase type 2 family.

It carries out the reaction alpha-D-mannose 1-phosphate + GTP + H(+) = GDP-alpha-D-mannose + diphosphate. It participates in nucleotide-sugar biosynthesis; GDP-alpha-D-mannose biosynthesis; GDP-alpha-D-mannose from alpha-D-mannose 1-phosphate (GTP route): step 1/1. Involved in the biosynthesis of the capsular polysaccharide colanic acid. This chain is Mannose-1-phosphate guanylyltransferase ManC (manC), found in Salmonella typhimurium (strain LT2 / SGSC1412 / ATCC 700720).